Here is a 488-residue protein sequence, read N- to C-terminus: Probable indole-3-acetic acid-amido synthetase GH3.6 (488 aa).

It belongs to the IAA-amido conjugating enzyme family. Expressed in roots and callus.

In terms of biological role, may catalyze the synthesis of indole-3-acetic acid (IAA)-amino acid conjugates, providing a mechanism for the plant to cope with the presence of excess auxin. In Oryza sativa subsp. japonica (Rice), this protein is Probable indole-3-acetic acid-amido synthetase GH3.6 (GH3.6).